Reading from the N-terminus, the 728-residue chain is Polyphosphate kinase (728 aa).

Asparagine 57 is an ATP binding site. The Mg(2+) site is built by arginine 408 and arginine 438. Histidine 468 functions as the Phosphohistidine intermediate in the catalytic mechanism. Residues tyrosine 501, arginine 597, and histidine 625 each coordinate ATP. The tract at residues 694-728 (VQRRPASPEQSQSSQAIFTAQAIAETTEDPELRSV) is disordered. Residues 695-709 (QRRPASPEQSQSSQA) are compositionally biased toward low complexity.

It belongs to the polyphosphate kinase 1 (PPK1) family. Mg(2+) is required as a cofactor. In terms of processing, an intermediate of this reaction is the autophosphorylated ppk in which a phosphate is covalently linked to a histidine residue through a N-P bond.

It carries out the reaction [phosphate](n) + ATP = [phosphate](n+1) + ADP. In terms of biological role, catalyzes the reversible transfer of the terminal phosphate of ATP to form a long-chain polyphosphate (polyP). This chain is Polyphosphate kinase, found in Synechocystis sp. (strain ATCC 27184 / PCC 6803 / Kazusa).